The chain runs to 404 residues: Phosphopentomutase (404 aa).

The Mn(2+) site is built by aspartate 10, aspartate 303, histidine 308, aspartate 344, histidine 345, and histidine 356.

This sequence belongs to the phosphopentomutase family. It depends on Mn(2+) as a cofactor.

Its subcellular location is the cytoplasm. The enzyme catalyses 2-deoxy-alpha-D-ribose 1-phosphate = 2-deoxy-D-ribose 5-phosphate. It catalyses the reaction alpha-D-ribose 1-phosphate = D-ribose 5-phosphate. It functions in the pathway carbohydrate degradation; 2-deoxy-D-ribose 1-phosphate degradation; D-glyceraldehyde 3-phosphate and acetaldehyde from 2-deoxy-alpha-D-ribose 1-phosphate: step 1/2. Functionally, isomerase that catalyzes the conversion of deoxy-ribose 1-phosphate (dRib-1-P) and ribose 1-phosphate (Rib-1-P) to deoxy-ribose 5-phosphate (dRib-5-P) and ribose 5-phosphate (Rib-5-P), respectively. The sequence is that of Phosphopentomutase from Shewanella sp. (strain ANA-3).